Consider the following 137-residue polypeptide: Large ribosomal subunit protein uL16 (137 aa).

Belongs to the universal ribosomal protein uL16 family. As to quaternary structure, part of the 50S ribosomal subunit.

In terms of biological role, binds 23S rRNA and is also seen to make contacts with the A and possibly P site tRNAs. This Azotobacter vinelandii (strain DJ / ATCC BAA-1303) protein is Large ribosomal subunit protein uL16.